The chain runs to 535 residues: Alpha-1,3-mannosyl-glycoprotein 4-beta-N-acetylglucosaminyltransferase A (535 aa).

Over 1 to 4 (MRLR) the chain is Cytoplasmic. A helical; Signal-anchor for type II membrane protein membrane pass occupies residues 5–27 (NGTVATALAFITSFLTLSWYTTW). A coiled-coil region spans residues 28 to 63 (QNGKEKLIAYQREFLALKERLRIAEHRISQRSSELN). The Lumenal segment spans residues 28 to 535 (QNGKEKLIAY…NEIHIKKATK (508 aa)). 2 N-linked (GlcNAc...) asparagine glycosylation sites follow: Asn-77 and Asn-458. Ser-474 carries the post-translational modification Phosphoserine.

Belongs to the glycosyltransferase 54 family. It depends on a divalent metal cation as a cofactor. In terms of processing, N-glycosylated.

It localises to the golgi apparatus membrane. Its subcellular location is the secreted. It catalyses the reaction N(4)-{beta-D-GlcNAc-(1-&gt;2)-alpha-D-Man-(1-&gt;3)-[beta-D-GlcNAc-(1-&gt;2)-alpha-D-Man-(1-&gt;6)]-beta-D-Man-(1-&gt;4)-beta-D-GlcNAc-(1-&gt;4)-beta-D-GlcNAc}-L-asparaginyl-[protein] + UDP-N-acetyl-alpha-D-glucosamine = N(4)-{beta-D-GlcNAc-(1-&gt;2)-[beta-D-GlcNAc-(1-&gt;4)]-alpha-D-Man-(1-&gt;3)-[beta-D-GlcNAc-(1-&gt;2)-alpha-D-Man-(1-&gt;6)]-beta-D-Man-(1-&gt;4)-beta-D-GlcNAc-(1-&gt;4)-beta-D-GlcNAc}-L-asparaginyl-[protein] + UDP + H(+). The enzyme catalyses an N(4)-{beta-D-GlcNAc-(1-&gt;2)-alpha-D-Man-(1-&gt;3)-[alpha-D-Man-(1-&gt;6)]-beta-D-Man-(1-&gt;4)-beta-D-GlcNAc-(1-&gt;4)-beta-D-GlcNAc}-L-asparaginyl-[protein] + UDP-N-acetyl-alpha-D-glucosamine = an N(4)-{beta-D-GlcNAc-(1-&gt;2)-[beta-D-GlcNAc-(1-&gt;4)]-alpha-D-Man-(1-&gt;3)-[alpha-D-Man-(1-&gt;6)]-beta-D-Man-(1-&gt;4)-beta-D-GlcNAc-(1-&gt;4)-beta-D-GlcNAc}-L-asparaginyl-[protein] + UDP + H(+). It carries out the reaction an N(4)-{beta-D-GlcNAc-(1-&gt;2)-alpha-D-Man-(1-&gt;3)-[beta-D-GlcNAc-(1-&gt;2)-[beta-D-GlcNAc-(1-&gt;6)]-alpha-D-Man-(1-&gt;6)]-beta-D-Man-(1-&gt;4)-beta-D-GlcNAc-(1-&gt;4)-beta-D-GlcNAc}-L-asparaginyl-[protein] + UDP-N-acetyl-alpha-D-glucosamine = an N(4)-{beta-D-GlcNAc-(1-&gt;2)-[beta-D-GlcNAc-(1-&gt;4)]-alpha-D-Man-(1-&gt;3)-[beta-D-GlcNAc-(1-&gt;2)-[beta-D-GlcNAc-(1-&gt;6)]-alpha-D-Man-(1-&gt;6)]-beta-D-Man-(1-&gt;4)-beta-D-GlcNAc-(1-&gt;4)-beta-D-GlcNAc}-L-asparaginyl-[protein] + UDP + H(+). The catalysed reaction is an N(4)-{beta-D-GlcNAc-(1-&gt;2)-alpha-D-Man-(1-&gt;3)-[beta-D-GlcNAc-(1-&gt;2)-alpha-D-Man-(1-&gt;6)]-beta-D-Man-(1-&gt;4)-beta-D-GlcNAc-(1-&gt;4)-[alpha-L-Fuc-(1-&gt;6)]-beta-D-GlcNAc}-L-asparaginyl-[protein] + UDP-N-acetyl-alpha-D-glucosamine = N(4)-{beta-D-GlcNAc-(1-&gt;2)-[beta-D-GlcNAc-(1-&gt;4)]-alpha-D-Man-(1-&gt;3)-[beta-D-GlcNAc-(1-&gt;2)-alpha-D-Man-(1-&gt;6)]-beta-D-Man-(1-&gt;4)-beta-D-GlcNAc-(1-&gt;4)-[alpha-L-Fuc-(1-&gt;6)]-beta-D-GlcNAc}-asparaginyl-[protein] + UDP + H(+). It catalyses the reaction an N(4)-{beta-D-GlcNAc-(1-&gt;2)-alpha-D-Man-(1-&gt;3)-[beta-D-Gal-(1-&gt;4)-beta-D-GlcNAc-(1-&gt;2)-alpha-D-Man-(1-&gt;6)]-beta-D-Man-(1-&gt;4)-beta-D-GlcNAc-(1-&gt;4)-beta-D-GlcNAc}-L-asparaginyl-[protein] + UDP-N-acetyl-alpha-D-glucosamine = an N(4)-{beta-D-GlcNAc-(1-&gt;2)-[beta-D-GlcNAc-(1-&gt;4)]-alpha-D-Man-(1-&gt;3)-[beta-D-Gal-(1-&gt;4)-beta-D-GlcNAc-(1-&gt;2)-alpha-D-Man-(1-&gt;6)]-beta-D-Man-(1-&gt;4)-beta-D-GlcNAc-(1-&gt;4)-beta-D-GlcNAc}-L-asparaginyl-[protein] + UDP + H(+). The enzyme catalyses N(4)-{beta-D-GlcNAc-(1-&gt;2)-alpha-D-Man-(1-&gt;3)-[alpha-D-Man-(1-&gt;3)-{alpha-D-Man-(1-&gt;6)}-alpha-D-Man-(1-&gt;6)]-beta-D-Man-(1-&gt;4)-beta-D-GlcNAc-(1-&gt;4)-beta-D-GlcNAc}-asparaginyl-[protein] + UDP-N-acetyl-alpha-D-glucosamine = N(4)-{beta-D-GlcNAc-(1-&gt;2)-[beta-D-GlcNAc-(1-&gt;4)]-alpha-D-Man-(1-&gt;3)-[alpha-D-Man-(1-&gt;3)-{alpha-D-Man-(1-&gt;6)}-alpha-D-Man-(1-&gt;6)]-beta-D-Man-(1-&gt;4)-beta-D-GlcNAc-(1-&gt;4)-beta-D-GlcNAc}-asparaginyl-[protein] + UDP + H(+). It carries out the reaction N(4)-{beta-D-GlcNAc-(1-&gt;2)-alpha-D-Man-(1-&gt;3)-beta-D-Man-(1-&gt;4)-beta-D-GlcNAc-(1-&gt;4)-beta-D-GlcNAc}-asparaginyl-[protein] + UDP-N-acetyl-alpha-D-glucosamine = N(4)-{beta-D-GlcNAc-(1-&gt;2)-[beta-D-GlcNAc-(1-&gt;4)]-alpha-D-Man-(1-&gt;3)-beta-D-Man-(1-&gt;4)-beta-D-GlcNAc-(1-&gt;4)-beta-D-GlcNAc}-asparaginyl-[protein] + UDP + H(+). It participates in protein modification; protein glycosylation. With respect to regulation, inhibited by UDP. Its function is as follows. Glycosyltransferase that catalyze the transfer of GlcNAc from UDP-GlcNAc to the GlcNAcbeta1-2Manalpha1-3 arm of the core structure of N-linked glycans through a beta1-4 linkage and participates in the production of tri- and tetra-antennary N-linked sugar chains. Involved in glucose transport by mediating SLC2A2/GLUT2 glycosylation, thereby controlling cell-surface expression of SLC2A2 in pancreatic beta cells. This chain is Alpha-1,3-mannosyl-glycoprotein 4-beta-N-acetylglucosaminyltransferase A, found in Macaca fascicularis (Crab-eating macaque).